A 270-amino-acid chain; its full sequence is Formamidopyrimidine-DNA glycosylase (270 aa).

Pro-2 acts as the Schiff-base intermediate with DNA in catalysis. Glu-3 serves as the catalytic Proton donor. Catalysis depends on Lys-58, which acts as the Proton donor; for beta-elimination activity. DNA contacts are provided by His-91, Arg-109, and Arg-151. Residues 236–270 (QVYGKTGQQCPSCETPLKAVKLAARASVYCPECQS) form an FPG-type zinc finger. Arg-260 serves as the catalytic Proton donor; for delta-elimination activity.

This sequence belongs to the FPG family. In terms of assembly, monomer. The cofactor is Zn(2+).

It carries out the reaction Hydrolysis of DNA containing ring-opened 7-methylguanine residues, releasing 2,6-diamino-4-hydroxy-5-(N-methyl)formamidopyrimidine.. The catalysed reaction is 2'-deoxyribonucleotide-(2'-deoxyribose 5'-phosphate)-2'-deoxyribonucleotide-DNA = a 3'-end 2'-deoxyribonucleotide-(2,3-dehydro-2,3-deoxyribose 5'-phosphate)-DNA + a 5'-end 5'-phospho-2'-deoxyribonucleoside-DNA + H(+). Involved in base excision repair of DNA damaged by oxidation or by mutagenic agents. Acts as a DNA glycosylase that recognizes and removes damaged bases. Has a preference for oxidized purines, such as 7,8-dihydro-8-oxoguanine (8-oxoG). Has AP (apurinic/apyrimidinic) lyase activity and introduces nicks in the DNA strand. Cleaves the DNA backbone by beta-delta elimination to generate a single-strand break at the site of the removed base with both 3'- and 5'-phosphates. This chain is Formamidopyrimidine-DNA glycosylase, found in Psychromonas ingrahamii (strain DSM 17664 / CCUG 51855 / 37).